A 560-amino-acid polypeptide reads, in one-letter code: Formate--tetrahydrofolate ligase (560 aa).

An ATP-binding site is contributed by 69 to 76 (TPAGEGKS).

This sequence belongs to the formate--tetrahydrofolate ligase family.

The catalysed reaction is (6S)-5,6,7,8-tetrahydrofolate + formate + ATP = (6R)-10-formyltetrahydrofolate + ADP + phosphate. It participates in one-carbon metabolism; tetrahydrofolate interconversion. In Listeria monocytogenes serovar 1/2a (strain ATCC BAA-679 / EGD-e), this protein is Formate--tetrahydrofolate ligase.